Consider the following 377-residue polypeptide: NADH dehydrogenase [ubiquinone] 1 alpha subcomplex subunit 9, mitochondrial (377 aa).

Residues 1–35 (MAAAAQSRVVRVLSMSRSAITAIATSVCHGPPCRQ) constitute a mitochondrion transit peptide. Position 175 is an N6-succinyllysine (K175). An N6-acetyllysine mark is found at K189 and K370.

The protein belongs to the complex I NDUFA9 subunit family. Complex I is composed of 45 different subunits. This a component of the hydrophobic protein fraction. Interacts with BLOC1S1. Interacts with SLC2A4. Interacts with CLOCK. Interacts with RAB5IF. The cofactor is FAD. Acetylated on lysine residues. BLOC1S1 is required for acetylation. Acetylated by CLOCK in a circadian manner.

The protein resides in the mitochondrion matrix. Functionally, accessory subunit of the mitochondrial membrane respiratory chain NADH dehydrogenase (Complex I), that is believed not to be involved in catalysis. Required for proper complex I assembly. Complex I functions in the transfer of electrons from NADH to the respiratory chain. The immediate electron acceptor for the enzyme is believed to be ubiquinone. The protein is NADH dehydrogenase [ubiquinone] 1 alpha subcomplex subunit 9, mitochondrial (NDUFA9) of Homo sapiens (Human).